The following is a 640-amino-acid chain: Protein argonaute (640 aa).

The tract at residues 1 to 100 is N-terminal domain; sequence MYLNLYEIKI…YIKKKFIDNN (100 aa). Positions 101 to 153 are linker L1; that stretch reads FYYKRGNNYISINDKFPLDSNTNVNAHLTYKIKLYKINERYYISVLPKFTFLS. Positions 154–209 are PAZ domain; that stretch reads DKPALESPIKSTYLFNIKSGKTFPYISGLNGVLKIDLGENGIKEVLFPENYYFNFT. The tract at residues 210-291 is linker L2; it reads SKEAEKFGFS…KYSFYKNDQK (82 aa). Positions 292-423 are mid domain; that stretch reads IKIAFFFSSK…YVYKMGNFIP (132 aa). A PIWI domain region spans residues 424-640; sequence ECQPYVIRNL…EWKLYIPYMK (217 aa). Catalysis depends on residues D445, E481, D515, and N623. D445 is a binding site for Mn(2+). 2 residues coordinate Mn(2+): D515 and N623.

The protein belongs to the argonaute family. Long pAgo subfamily. Requires Mn(2+) as cofactor.

In terms of biological role, a highly versatile argonaute that uses 5'-phospho- and 5'-OH- guide RNA (gRNA) or DNA (gDNA) to cleave target RNA or ssDNA (tDNA) in all possible combinations; has no detectable activity in the absence of guide. Uses short guide sequences (18-21 nucleotides (nt) on average) to bind complementary target nucleic acids resulting in target cleavage in a site-specific manner. Using 5'-phospho-gRNA or 5'-OH-gRNA the cleavage site is 10 nt downstream of the target residue base-paired with the 5'-end of the gRNA, using 5'-phospho-gDNA the cleavage site is 11 nucleotides (nt) downstream, while with 5'-OH-gDNA the cleavage site is 9 nt downstream. The chain is Protein argonaute from Marinitoga hydrogenitolerans (strain DSM 16785 / JCM 12826 / AT1271).